Here is a 163-residue protein sequence, read N- to C-terminus: Putative pre-16S rRNA nuclease (163 aa).

This sequence belongs to the YqgF nuclease family.

The protein localises to the cytoplasm. Could be a nuclease involved in processing of the 5'-end of pre-16S rRNA. The protein is Putative pre-16S rRNA nuclease of Zymomonas mobilis subsp. mobilis (strain ATCC 31821 / ZM4 / CP4).